Reading from the N-terminus, the 551-residue chain is Ubiquitin carboxyl-terminal hydrolase 24 (551 aa).

Disordered regions lie at residues 51–104 (NSSV…SLRV) and 163–188 (NEDF…TESV). A USP domain is found at 197–551 (RGLINAGNLC…QAYVLFYKQV (355 aa)). Cysteine 206 serves as the catalytic Nucleophile. Polar residues predominate over residues 329–338 (SKSSVISSAN). The tract at residues 329-349 (SKSSVISSANDDGDEWETVGP) is disordered. Histidine 510 functions as the Proton acceptor in the catalytic mechanism.

It belongs to the peptidase C19 family.

The catalysed reaction is Thiol-dependent hydrolysis of ester, thioester, amide, peptide and isopeptide bonds formed by the C-terminal Gly of ubiquitin (a 76-residue protein attached to proteins as an intracellular targeting signal).. Functionally, recognizes and hydrolyzes the peptide bond at the C-terminal Gly of ubiquitin. Involved in the processing of poly-ubiquitin precursors as well as that of ubiquitinated proteins. This Arabidopsis thaliana (Mouse-ear cress) protein is Ubiquitin carboxyl-terminal hydrolase 24 (UBP24).